We begin with the raw amino-acid sequence, 490 residues long: Betaine aldehyde dehydrogenase (490 aa).

The K(+) site is built by Thr-26, Ile-27, and Asp-93. 150–152 provides a ligand contact to NAD(+); that stretch reads GAW. Residue Lys-162 is the Charge relay system of the active site. Residue 176–179 participates in NAD(+) binding; it reads KPSE. Val-180 is a K(+) binding site. Position 230-233 (230-233) interacts with NAD(+); it reads GVAS. Leu-246 lines the K(+) pocket. The active-site Proton acceptor is Glu-252. 3 residues coordinate NAD(+): Gly-254, Cys-286, and Glu-387. Cys-286 (nucleophile) is an active-site residue. Residue Cys-286 is modified to Cysteine sulfenic acid (-SOH). Lys-457 and Gly-460 together coordinate K(+). Glu-464 functions as the Charge relay system in the catalytic mechanism.

It belongs to the aldehyde dehydrogenase family. Dimer of dimers. K(+) serves as cofactor.

It catalyses the reaction betaine aldehyde + NAD(+) + H2O = glycine betaine + NADH + 2 H(+). Its pathway is amine and polyamine biosynthesis; betaine biosynthesis via choline pathway; betaine from betaine aldehyde: step 1/1. Its function is as follows. Involved in the biosynthesis of the osmoprotectant glycine betaine. Catalyzes the irreversible oxidation of betaine aldehyde to the corresponding acid. The chain is Betaine aldehyde dehydrogenase from Escherichia coli (strain 55989 / EAEC).